The sequence spans 214 residues: Putative ras-related protein Rab-5B (214 aa).

Residue 56–63 (GEMNTGKT) participates in GTP binding. An Effector region motif is present at residues 77–85 (TDSTIGAAF). Residues 103 to 107 (DTAGQ) and 161 to 164 (NKVD) contribute to the GTP site.

It belongs to the small GTPase superfamily. Rab family. In terms of processing, this sequence lacks the C-terminal cysteine motifs subject to isoprenylation in other Rab proteins.

This is Putative ras-related protein Rab-5B (rab5B) from Dictyostelium discoideum (Social amoeba).